The chain runs to 350 residues: Uroporphyrinogen decarboxylase (350 aa).

Residues arginine 28–arginine 32, phenylalanine 47, aspartate 78, tyrosine 155, serine 210, and histidine 325 contribute to the substrate site.

The protein belongs to the uroporphyrinogen decarboxylase family. Homodimer.

It localises to the cytoplasm. The catalysed reaction is uroporphyrinogen III + 4 H(+) = coproporphyrinogen III + 4 CO2. The protein operates within porphyrin-containing compound metabolism; protoporphyrin-IX biosynthesis; coproporphyrinogen-III from 5-aminolevulinate: step 4/4. Its function is as follows. Catalyzes the decarboxylation of four acetate groups of uroporphyrinogen-III to yield coproporphyrinogen-III. The protein is Uroporphyrinogen decarboxylase of Synechocystis sp. (strain ATCC 27184 / PCC 6803 / Kazusa).